Reading from the N-terminus, the 193-residue chain is GDP-mannose pyrophosphatase (193 aa).

GDP-alpha-D-mannose contacts are provided by residues Ile38–Glu40, Arg67, and Ala85–Leu87. The region spanning Asp43–Leu180 is the Nudix hydrolase domain. Mg(2+)-binding residues include Ala85, Glu100, and Glu104. A Nudix box motif is present at residues Gly86–Gly106. GDP-alpha-D-mannose contacts are provided by residues Glu104, Glu127, Asp150–Glu151, and Lys176. Glu151 provides a ligand contact to Mg(2+).

The protein belongs to the Nudix hydrolase family. NudK subfamily. Homodimer. The cofactor is Mg(2+).

The catalysed reaction is GDP-alpha-D-mannose + H2O = alpha-D-mannose 1-phosphate + GMP + 2 H(+). Functionally, nucleoside diphosphate sugar hydrolase that hydrolyzes GDP-mannose as its preferred substrate, yielding GMP and mannose-1-phosphate. In Pectobacterium atrosepticum (strain SCRI 1043 / ATCC BAA-672) (Erwinia carotovora subsp. atroseptica), this protein is GDP-mannose pyrophosphatase (nudK).